The primary structure comprises 707 residues: Polyribonucleotide nucleotidyltransferase (707 aa).

2 residues coordinate Mg(2+): D487 and D493. A KH domain is found at 554-613 (PKILTMNINPDKIRDVIGPSGKQINKIIEDTGVKIDIEQDGTIFISSTDESSNQKAKKII). An S1 motif domain is found at 623 to 691 (GQLYLGKVKR…KQGRVNLSRK (69 aa)).

This sequence belongs to the polyribonucleotide nucleotidyltransferase family. The cofactor is Mg(2+).

The protein localises to the cytoplasm. It carries out the reaction RNA(n+1) + phosphate = RNA(n) + a ribonucleoside 5'-diphosphate. In terms of biological role, involved in mRNA degradation. Catalyzes the phosphorolysis of single-stranded polyribonucleotides processively in the 3'- to 5'-direction. The protein is Polyribonucleotide nucleotidyltransferase of Bacillus velezensis (strain DSM 23117 / BGSC 10A6 / LMG 26770 / FZB42) (Bacillus amyloliquefaciens subsp. plantarum).